The chain runs to 159 residues: Cytochrome b6-f complex subunit 4 (159 aa).

Transmembrane regions (helical) follow at residues 36–56 (LLYI…GLAV), 95–115 (LLGV…PFLE), and 131–151 (TVFL…TLPI).

It belongs to the cytochrome b family. PetD subfamily. As to quaternary structure, the 4 large subunits of the cytochrome b6-f complex are cytochrome b6, subunit IV (17 kDa polypeptide, petD), cytochrome f and the Rieske protein, while the 4 small subunits are petG, petL, petM and petN. The complex functions as a dimer.

It localises to the plastid. Its subcellular location is the chloroplast thylakoid membrane. Functionally, component of the cytochrome b6-f complex, which mediates electron transfer between photosystem II (PSII) and photosystem I (PSI), cyclic electron flow around PSI, and state transitions. The polypeptide is Cytochrome b6-f complex subunit 4 (Piper cenocladum (Ant piper)).